The primary structure comprises 186 residues: Large ribosomal subunit protein uL5 (186 aa).

Belongs to the universal ribosomal protein uL5 family. In terms of assembly, part of the 50S ribosomal subunit; part of the 5S rRNA/L5/L18/L25 subcomplex. Contacts the 5S rRNA and the P site tRNA. Forms a bridge to the 30S subunit in the 70S ribosome.

Its function is as follows. This is one of the proteins that bind and probably mediate the attachment of the 5S RNA into the large ribosomal subunit, where it forms part of the central protuberance. In the 70S ribosome it contacts protein S13 of the 30S subunit (bridge B1b), connecting the 2 subunits; this bridge is implicated in subunit movement. Contacts the P site tRNA; the 5S rRNA and some of its associated proteins might help stabilize positioning of ribosome-bound tRNAs. The polypeptide is Large ribosomal subunit protein uL5 (Porphyromonas gingivalis (strain ATCC 33277 / DSM 20709 / CIP 103683 / JCM 12257 / NCTC 11834 / 2561)).